The sequence spans 199 residues: MSTTRMISDNERRFVDYLNSSFMPFWRRTAFVYKCELAFSILILFCAFAELIFYDCFVIFFLMIIASFVFVLLYLEFYFGSVYNCPALLHLHTLSAAFMSMVCWLSVLIPIFFGESIYIASRYVAHVIYKYYGCQVIFGSLLTTFAAASFARRKEIKSVELSHVDYLKRLMKLTSKVAEDVQKEAKSFELELLDIHSYS.

A run of 4 helical transmembrane segments spans residues 35 to 55, 57 to 77, 94 to 114, and 131 to 151; these read CELA…IFYD, FVIF…YLEF, LSAA…IFFG, and YYGC…ASFA.

It localises to the membrane. This is an uncharacterized protein from Caenorhabditis elegans.